The following is a 372-amino-acid chain: Glutamate 5-kinase (372 aa).

Lys14 contributes to the ATP binding site. Substrate-binding residues include Ser54, Asp141, and Asn153. ATP is bound by residues 173 to 174 (TD) and 215 to 221 (TGGMATK). In terms of domain architecture, PUA spans 280–358 (KGKLVLDVGA…DEIESLLGYD (79 aa)).

The protein belongs to the glutamate 5-kinase family.

Its subcellular location is the cytoplasm. It catalyses the reaction L-glutamate + ATP = L-glutamyl 5-phosphate + ADP. It functions in the pathway amino-acid biosynthesis; L-proline biosynthesis; L-glutamate 5-semialdehyde from L-glutamate: step 1/2. In terms of biological role, catalyzes the transfer of a phosphate group to glutamate to form L-glutamate 5-phosphate. This Shewanella woodyi (strain ATCC 51908 / MS32) protein is Glutamate 5-kinase.